The following is a 386-amino-acid chain: Cell division protein FtsZ (386 aa).

GTP-binding positions include G21 to N25, G108 to G110, E139, R143, and N187.

This sequence belongs to the FtsZ family. As to quaternary structure, homodimer. Polymerizes to form a dynamic ring structure in a strictly GTP-dependent manner. Interacts directly with several other division proteins.

The protein resides in the cytoplasm. Functionally, essential cell division protein that forms a contractile ring structure (Z ring) at the future cell division site. The regulation of the ring assembly controls the timing and the location of cell division. One of the functions of the FtsZ ring is to recruit other cell division proteins to the septum to produce a new cell wall between the dividing cells. Binds GTP and shows GTPase activity. The polypeptide is Cell division protein FtsZ (Coxiella burnetii (strain RSA 493 / Nine Mile phase I)).